We begin with the raw amino-acid sequence, 720 residues long: Phosphatase and actin regulator 4 (720 aa).

A disordered region spans residues Met-1–Phe-48. The stretch at Glu-74–Pro-99 is one RPEL 1 repeat. Disordered regions lie at residues Ser-294–Arg-417, Asn-454–Ala-568, and Arg-610–Arg-648. Pro residues predominate over residues Thr-346 to Pro-368. A compositionally biased stretch (basic and acidic residues) spans Lys-393–Ala-405. Acidic residues-rich tracts occupy residues Asp-481–Gln-494, Glu-521–Ser-534, and Asp-542–Glu-551. RPEL repeat units lie at residues Thr-601–Asn-626 and Arg-639–Glu-664. Residues Asn-626–Glu-636 are compositionally biased toward basic and acidic residues. A compositionally biased stretch (basic residues) spans Ile-637–Ser-646.

Belongs to the phosphatase and actin regulator family. Binds PPP1CA and actin.

It localises to the cytoplasm. It is found in the cell projection. The protein resides in the lamellipodium. In terms of biological role, regulator of protein phosphatase 1 (PP1) required for neural tube and optic fissure closure, and enteric neural crest cell (ENCCs) migration during development. Acts as an activator of PP1. During neural tube closure, localizes to the ventral neural tube and activates PP1, leading to down-regulate cell proliferation within cranial neural tissue and the neural retina. Also acts as a regulator of migration of enteric neural crest cells (ENCCs) by activating PP1, leading to repression of the integrin signaling through the RHO/ROCK pathway. The polypeptide is Phosphatase and actin regulator 4 (PHACTR4) (Gallus gallus (Chicken)).